A 461-amino-acid chain; its full sequence is Fumarate hydratase class II (461 aa).

Residues serine 97–threonine 99, histidine 127–aspartate 130, serine 137–asparagine 139, and threonine 185 contribute to the substrate site. The active-site Proton donor/acceptor is the histidine 186. Serine 316 is an active-site residue. Substrate is bound by residues serine 317 and lysine 322–asparagine 324.

Belongs to the class-II fumarase/aspartase family. Fumarase subfamily. As to quaternary structure, homotetramer.

It is found in the cytoplasm. It catalyses the reaction (S)-malate = fumarate + H2O. It functions in the pathway carbohydrate metabolism; tricarboxylic acid cycle; (S)-malate from fumarate: step 1/1. Its function is as follows. Involved in the TCA cycle. Catalyzes the stereospecific interconversion of fumarate to L-malate. The chain is Fumarate hydratase class II from Staphylococcus aureus (strain MRSA252).